The chain runs to 211 residues: tRNA (guanine-N(7)-)-methyltransferase (211 aa).

Residues E44, D69, D96, and D118 each coordinate S-adenosyl-L-methionine. The active site involves D118. Residue K122 participates in substrate binding. An interaction with RNA region spans residues 124-129; the sequence is RHEKRR. Substrate contacts are provided by residues D154 and 191-194; that span reads TEYE.

It belongs to the class I-like SAM-binding methyltransferase superfamily. TrmB family.

The enzyme catalyses guanosine(46) in tRNA + S-adenosyl-L-methionine = N(7)-methylguanosine(46) in tRNA + S-adenosyl-L-homocysteine. It functions in the pathway tRNA modification; N(7)-methylguanine-tRNA biosynthesis. In terms of biological role, catalyzes the formation of N(7)-methylguanine at position 46 (m7G46) in tRNA. The chain is tRNA (guanine-N(7)-)-methyltransferase from Streptococcus pneumoniae (strain CGSP14).